The chain runs to 103 residues: UPF0235 protein RHECIAT_CH0004196 (103 aa).

The protein belongs to the UPF0235 family.

This Rhizobium etli (strain CIAT 652) protein is UPF0235 protein RHECIAT_CH0004196.